The sequence spans 865 residues: Xylosyltransferase 2 (865 aa).

At 1 to 15 the chain is on the cytoplasmic side; it reads MVASARVQKLVRRYK. The chain crosses the membrane as a helical; Signal-anchor for type II membrane protein span at residues 16–36; that stretch reads LAIATALAILLLQGLVVWSFS. The Lumenal segment spans residues 37 to 865; the sequence is GLEEDEPGEK…GPVKADGRLR (829 aa). The tract at residues 39–155 is disordered; sequence EEDEPGEKGR…SVEGAPQPTD (117 aa). The span at 53–65 shows a compositional bias: basic and acidic residues; it reads RPLDPGEGSKDTD. The segment covering 73-82 has biased composition (basic residues); it reads SAGRRHGRWR. Asn122 is a glycosylation site (N-linked (GlcNAc...) asparagine). Disulfide bonds link Cys162–Cys190, Cys206–Cys448, Cys467–Cys480, and Cys469–Cys478. UDP-alpha-D-xylose is bound by residues Val239, Asp267, and 296 to 298; that span reads TIW. Residue Asn327 is glycosylated (N-linked (GlcNAc...) asparagine). 400–401 is a binding site for UDP-alpha-D-xylose; the sequence is DW. UDP-alpha-D-xylose-binding positions include Ser481 and 504–505; that span reads RK. Disulfide bonds link Cys581–Cys833 and Cys826–Cys839. The N-linked (GlcNAc...) asparagine glycan is linked to Asn683.

This sequence belongs to the glycosyltransferase 14 family. XylT subfamily. Monomer. Mg(2+) is required as a cofactor. Mn(2+) serves as cofactor. In terms of processing, contains disulfide bonds. As to expression, detected in brain, liver, lung, kidney, heart, spleen and testis, and at lower levels in skeletal muscle.

The protein localises to the golgi apparatus membrane. The protein resides in the secreted. The enzyme catalyses UDP-alpha-D-xylose + L-seryl-[protein] = 3-O-(beta-D-xylosyl)-L-seryl-[protein] + UDP + H(+). Its pathway is glycan metabolism; chondroitin sulfate biosynthesis. It participates in glycan metabolism; heparan sulfate biosynthesis. Its function is as follows. Catalyzes the first step in the biosynthesis of chondroitin sulfate, heparan sulfate and dermatan sulfate proteoglycans, such as DCN. Transfers D-xylose from UDP-D-xylose to specific serine residues of the core protein. This is Xylosyltransferase 2 (Xylt2) from Mus musculus (Mouse).